The primary structure comprises 328 residues: MKFGIEFVPADPALKIAYYAKLSEQQGFDYVWITDHYNNRDVYSTLTVLALNTNSIKIGSGVTNSYTRNPAITASSIASIAEISGGRAVLGLGPGDKATFDAMGIAWEKPLATTKEAIQAIRDFIDGKKVSMDGEMVKFAGAKLAFKAGKIPIYMGAQGPKMLELAGEVADGVLINASHPKDFEVAVEQIRKGAEKVGRDPSEVDVTAYACFSIDKDPVKAVNAAKVVVAFIVAGSPDLVLERHGISVEAKKQIGDAIAKGDFGSLMGGLVTPQMIEAFSICGTPEDCMKRIKDLEAIGVTQIVAGSPIGPDKEKAIKLIGKEIIAKM.

The protein belongs to the mer family.

It is found in the cytoplasm. The catalysed reaction is 5-methyl-5,6,7,8-tetrahydromethanopterin + oxidized coenzyme F420-(gamma-L-Glu)(n) + H(+) = 5,10-methylenetetrahydromethanopterin + reduced coenzyme F420-(gamma-L-Glu)(n). The protein operates within one-carbon metabolism; methanogenesis from CO(2); methyl-coenzyme M from 5,10-methylene-5,6,7,8-tetrahydromethanopterin: step 1/2. In terms of biological role, catalyzes the reversible reduction of methylene-H(4)MPT to methyl-H(4)MPT. This chain is 5,10-methylenetetrahydromethanopterin reductase, found in Methanosarcina mazei (strain ATCC BAA-159 / DSM 3647 / Goe1 / Go1 / JCM 11833 / OCM 88) (Methanosarcina frisia).